The following is a 342-amino-acid chain: MTHSLKPWNTFGIDHCAKHIACAENEQQILSAWQQATREGLPVMILGEGSNVLFLENYAGTVILNRLKGIEVNETADAWHLHVGAGENWHQLVRYALDNNMPGLENLALIPGCVGSSPIQNIGAYGVELQRVCDYVDCVELETGKRLRLSAAECRFGYRDSIFKNEYQDRVAIVAVGLRLSKQWQPVLTYGDLTRLDPKTVTAQQVFDAVCHMRTTKLPDPKVNGNAGSFFKNPVVAADIAMELLERFPNAPHYPQADGSVKLAAGWLIDQCQLKGVTIGGAAVHRQQALVLINANDATSKDVVALAHHVRQKVGEKFNVWLEPEVRFIGRSGEVNAVESIA.

Residues 13-183 (IDHCAKHIAC…VAVGLRLSKQ (171 aa)) enclose the FAD-binding PCMH-type domain. The active site involves R159. S229 acts as the Proton donor in catalysis. E325 is an active-site residue.

This sequence belongs to the MurB family. It depends on FAD as a cofactor.

It localises to the cytoplasm. The enzyme catalyses UDP-N-acetyl-alpha-D-muramate + NADP(+) = UDP-N-acetyl-3-O-(1-carboxyvinyl)-alpha-D-glucosamine + NADPH + H(+). The protein operates within cell wall biogenesis; peptidoglycan biosynthesis. In terms of biological role, cell wall formation. The chain is UDP-N-acetylenolpyruvoylglucosamine reductase from Salmonella choleraesuis (strain SC-B67).